The sequence spans 429 residues: Histidinol dehydrogenase (429 aa).

NAD(+)-binding residues include Tyr-130, Gln-191, and Asn-214. Substrate-binding residues include Ser-237, Gln-259, and His-262. Residues Gln-259 and His-262 each coordinate Zn(2+). Catalysis depends on proton acceptor residues Glu-327 and His-328. 4 residues coordinate substrate: His-328, Asp-361, Glu-415, and His-420. Asp-361 contributes to the Zn(2+) binding site. His-420 contacts Zn(2+).

It belongs to the histidinol dehydrogenase family. It depends on Zn(2+) as a cofactor.

It catalyses the reaction L-histidinol + 2 NAD(+) + H2O = L-histidine + 2 NADH + 3 H(+). It functions in the pathway amino-acid biosynthesis; L-histidine biosynthesis; L-histidine from 5-phospho-alpha-D-ribose 1-diphosphate: step 9/9. Its function is as follows. Catalyzes the sequential NAD-dependent oxidations of L-histidinol to L-histidinaldehyde and then to L-histidine. This is Histidinol dehydrogenase from Neisseria gonorrhoeae (strain ATCC 700825 / FA 1090).